The following is a 316-amino-acid chain: Homoserine kinase (316 aa).

ATP is bound at residue 97–107 (PHSRGLGSSAA).

This sequence belongs to the GHMP kinase family. Homoserine kinase subfamily.

It is found in the cytoplasm. It carries out the reaction L-homoserine + ATP = O-phospho-L-homoserine + ADP + H(+). It functions in the pathway amino-acid biosynthesis; L-threonine biosynthesis; L-threonine from L-aspartate: step 4/5. Its function is as follows. Catalyzes the ATP-dependent phosphorylation of L-homoserine to L-homoserine phosphate. In Mycobacterium tuberculosis (strain ATCC 25618 / H37Rv), this protein is Homoserine kinase.